A 599-amino-acid chain; its full sequence is Elongation factor 4 (599 aa).

Positions 4 to 186 (DNIRNFSIIA…EIVNKIPPPR (183 aa)) constitute a tr-type G domain. GTP-binding positions include 16–21 (DHGKST) and 133–136 (NKID).

It belongs to the TRAFAC class translation factor GTPase superfamily. Classic translation factor GTPase family. LepA subfamily.

It localises to the cell inner membrane. It carries out the reaction GTP + H2O = GDP + phosphate + H(+). Required for accurate and efficient protein synthesis under certain stress conditions. May act as a fidelity factor of the translation reaction, by catalyzing a one-codon backward translocation of tRNAs on improperly translocated ribosomes. Back-translocation proceeds from a post-translocation (POST) complex to a pre-translocation (PRE) complex, thus giving elongation factor G a second chance to translocate the tRNAs correctly. Binds to ribosomes in a GTP-dependent manner. This is Elongation factor 4 from Geotalea daltonii (strain DSM 22248 / JCM 15807 / FRC-32) (Geobacter daltonii).